The primary structure comprises 417 residues: MTLAEKILSQKAGRKVEPGEFLLLEPDIALANDITAPLAIKKFKEYGGKKVKYPDRVVLVPDHFTPNKDIKSAMQVKMMREFAREQGIEKFFEIGRMGIEHVLLPEEGIVKSGDLVVGADSHTCTYGALGAFATGVGSTDIAGFYLIGKVWFRVPESIKVTLRGKFKDLVTAKDLVLKLISILGVDGANYKAIEFSGPGVKEISMDGRFTISNMAIEAGGKTGLFPVDEITIAYERERGIEVEEMYPDEDAKYVREVEMDLSELEPQVAYPFLPSNAKDVSEAEKERIKIDQAVIGSCTNGRIEDLRLAAQILKGRTVSPDVRCIIIPGSQKVYKQALKEGLIDIFIDAGCAVSTPTCGPCLGGHMGVLAEGEVAISTTNRNFVGRMGHPNSKVFLASPAVAAASAIKGYIADPRKL.

Positions 298, 358, and 361 each coordinate [4Fe-4S] cluster.

It belongs to the aconitase/IPM isomerase family. LeuC type 2 subfamily. Heterodimer of LeuC and LeuD. It depends on [4Fe-4S] cluster as a cofactor.

The catalysed reaction is (2R,3S)-3-isopropylmalate = (2S)-2-isopropylmalate. It participates in amino-acid biosynthesis; L-leucine biosynthesis; L-leucine from 3-methyl-2-oxobutanoate: step 2/4. Catalyzes the isomerization between 2-isopropylmalate and 3-isopropylmalate, via the formation of 2-isopropylmaleate. The chain is 3-isopropylmalate dehydratase large subunit 2 from Thermotoga maritima (strain ATCC 43589 / DSM 3109 / JCM 10099 / NBRC 100826 / MSB8).